The chain runs to 469 residues: DNA (cytosine-5-)-methyltransferase M.ApeKI (469 aa).

The region spanning 4–469 is the SAM-dependent MTase C5-type domain; it reads YSTISLFSGA…EALAEVLDAV (466 aa). Cysteine 93 is an active-site residue.

The protein belongs to the class I-like SAM-binding methyltransferase superfamily. C5-methyltransferase family.

The enzyme catalyses a 2'-deoxycytidine in DNA + S-adenosyl-L-methionine = a 5-methyl-2'-deoxycytidine in DNA + S-adenosyl-L-homocysteine + H(+). Functionally, cytosine methylase that recognizes the double-stranded sequence 5'-GC(A/T)GC-3', methylates C-5 position of the second cytosine on both strands, and protects the DNA from cleavage by the ApeKI endonuclease. The sequence is that of DNA (cytosine-5-)-methyltransferase M.ApeKI from Aeropyrum pernix (strain ATCC 700893 / DSM 11879 / JCM 9820 / NBRC 100138 / K1).